A 328-amino-acid polypeptide reads, in one-letter code: Cytochrome c biogenesis protein CcsA (328 aa).

8 helical membrane passes run 13–33, 46–66, 73–93, 101–121, 146–166, 234–254, 263–283, and 295–315; these read ISFS…LVNL, GIII…IYSG, LYES…VSYF, LNAI…SGLL, MILG…LLVI, IISL…VWAN, WDPK…YLHI, and AIVA…VILL.

The protein belongs to the CcmF/CycK/Ccl1/NrfE/CcsA family. May interact with Ccs1.

The protein resides in the plastid. It is found in the chloroplast thylakoid membrane. In terms of biological role, required during biogenesis of c-type cytochromes (cytochrome c6 and cytochrome f) at the step of heme attachment. This chain is Cytochrome c biogenesis protein CcsA, found in Crucihimalaya wallichii (Rock-cress).